A 58-amino-acid chain; its full sequence is Metallothionein (58 aa).

Residues 1–29 (PDPCCAEGTCECEEGKCKAGCKCTSCRCS) form a beta region. A divalent metal cation contacts are provided by Cys-4, Cys-5, Cys-10, Cys-12, Cys-17, Cys-21, Cys-23, Cys-26, Cys-28, Cys-31, Cys-34, Cys-38, Cys-40, Cys-46, Cys-50, Cys-54, Cys-56, and Cys-57. Residues 30–58 (PCEKCTSECECKSKEECAKNCTKPCSCCP) form an alpha region.

Metallothioneins have a high content of cysteine residues that bind various heavy metals. Class I MTS in crustacea are involved in the sequestration of elevated levels of heavy-metal ions. The protein is Metallothionein of Potamon potamios.